The following is a 219-amino-acid chain: MANVSIRKYKTSDYETARFLFAEGTKEHLPAACMYTLTTPRFYFITFVAFTSVFMGTGSYVLALTSLVALLAAGWYGLYSEFHGLASRFLRKDMLDIEKSYMMSENACFWVAEIDGKVVGTVGAQPSTDADDELLLQRISVARDYRQLRIGTKLCQTVIDFARQRGFNAVCLETANIQRAATNLYERVGFKKSRVEILPSLVHQYTSFTVAYYRYNIKS.

The next 2 helical transmembrane spans lie at 44-64 (FITF…VLAL) and 66-86 (SLVA…HGLA). The region spanning 62–211 (LALTSLVALL…VHQYTSFTVA (150 aa)) is the N-acetyltransferase domain.

The protein belongs to the camello family.

The protein localises to the golgi apparatus membrane. Its function is as follows. Plays a role in regulation of gastrulation, possibly by controlled reduction of cell adhesion in the periblastopore region which is necessary for optimal cell motility. This Xenopus tropicalis (Western clawed frog) protein is Probable N-acetyltransferase camello.